The following is a 177-amino-acid chain: Large ribosomal subunit protein uL6 (177 aa).

This sequence belongs to the universal ribosomal protein uL6 family. As to quaternary structure, part of the 50S ribosomal subunit.

Functionally, this protein binds to the 23S rRNA, and is important in its secondary structure. It is located near the subunit interface in the base of the L7/L12 stalk, and near the tRNA binding site of the peptidyltransferase center. In Hahella chejuensis (strain KCTC 2396), this protein is Large ribosomal subunit protein uL6.